We begin with the raw amino-acid sequence, 233 residues long: Cytochrome c oxidase subunit 3 (233 aa).

The next 4 helical transmembrane spans lie at 62–82 (VVLFLVAESAIFLGLFTAYLI), 98–118 (LELLLPGVNSIILISSSFVMH), 135–155 (WFGITAAMGIIFLAGQMYEYF), and 172–192 (VLTGFHGLHVTFGLLLILSVL).

Belongs to the cytochrome c oxidase subunit 3 family.

It is found in the cell membrane. The catalysed reaction is 4 Fe(II)-[cytochrome c] + O2 + 8 H(+)(in) = 4 Fe(III)-[cytochrome c] + 2 H2O + 4 H(+)(out). This is Cytochrome c oxidase subunit 3 (ctaE) from Synechocystis sp. (strain ATCC 27184 / PCC 6803 / Kazusa).